Here is an 85-residue protein sequence, read N- to C-terminus: Beta-insect depressant toxin Lqh-dprIT3d (85 aa).

Positions 1 to 21 are cleaved as a signal peptide; sequence MKLLLLLTISASMLIEGLVNA. In terms of domain architecture, LCN-type CS-alpha/beta spans 22–82; that stretch reads DGYIRGGDGC…EWDYETNTCG (61 aa). 4 cysteine pairs are disulfide-bonded: Cys-31-Cys-81, Cys-35-Cys-56, Cys-42-Cys-63, and Cys-46-Cys-65. A Glycine amide modification is found at Gly-82.

It belongs to the long (4 C-C) scorpion toxin superfamily. Sodium channel inhibitor family. Beta subfamily. Expressed by the venom gland.

It localises to the secreted. In terms of biological role, depressant insect beta-toxins cause a transient contraction paralysis followed by a slow flaccid paralysis. They bind voltage-independently at site-4 of sodium channels (Nav) and block action potentials, primarily by depolarizing the axonal membrane and suppressing the sodium current. This depressant toxin is active only on insects. It is found in a relatively small amount in the venom, and its activity on insects is 10-fold higher compared to other known depressant toxins. The sequence is that of Beta-insect depressant toxin Lqh-dprIT3d from Leiurus hebraeus (Hebrew deathstalker scorpion).